Consider the following 346-residue polypeptide: Flap endonuclease 1 (346 aa).

Residues 1–102 (MGVTELGKLI…AEIEERRKVK (102 aa)) are N-domain. Asp31, Asp84, Glu156, Glu158, Asp177, Asp179, and Asp239 together coordinate Mg(2+). The interval 120–261 (DVAKYMKRAV…KALKLVWEFG (142 aa)) is I-domain.

It belongs to the XPG/RAD2 endonuclease family. FEN1 subfamily. In terms of assembly, interacts with PCNA. PCNA stimulates the nuclease activity without altering cleavage specificity. The cofactor is Mg(2+).

In terms of biological role, structure-specific nuclease with 5'-flap endonuclease and 5'-3' exonuclease activities involved in DNA replication and repair. During DNA replication, cleaves the 5'-overhanging flap structure that is generated by displacement synthesis when DNA polymerase encounters the 5'-end of a downstream Okazaki fragment. Binds the unpaired 3'-DNA end and kinks the DNA to facilitate 5' cleavage specificity. Cleaves one nucleotide into the double-stranded DNA from the junction in flap DNA, leaving a nick for ligation. Also involved in the base excision repair (BER) pathway. Acts as a genome stabilization factor that prevents flaps from equilibrating into structures that lead to duplications and deletions. Also possesses 5'-3' exonuclease activity on nicked or gapped double-stranded DNA. The sequence is that of Flap endonuclease 1 from Pyrobaculum islandicum (strain DSM 4184 / JCM 9189 / GEO3).